The following is a 374-amino-acid chain: Erythronate-4-phosphate dehydrogenase (374 aa).

Positions 53 and 75 each coordinate substrate. Residue aspartate 160 participates in NAD(+) binding. Residue arginine 222 is part of the active site. Position 246 (aspartate 246) interacts with NAD(+). The active site involves glutamate 251. Histidine 268 serves as the catalytic Proton donor. Glycine 271 contacts NAD(+). A substrate-binding site is contributed by tyrosine 272.

Belongs to the D-isomer specific 2-hydroxyacid dehydrogenase family. PdxB subfamily. In terms of assembly, homodimer.

Its subcellular location is the cytoplasm. The enzyme catalyses 4-phospho-D-erythronate + NAD(+) = (R)-3-hydroxy-2-oxo-4-phosphooxybutanoate + NADH + H(+). It functions in the pathway cofactor biosynthesis; pyridoxine 5'-phosphate biosynthesis; pyridoxine 5'-phosphate from D-erythrose 4-phosphate: step 2/5. Catalyzes the oxidation of erythronate-4-phosphate to 3-hydroxy-2-oxo-4-phosphonooxybutanoate. The polypeptide is Erythronate-4-phosphate dehydrogenase (Psychrobacter sp. (strain PRwf-1)).